Consider the following 414-residue polypeptide: Esterase FrsA (414 aa).

Belongs to the FrsA family.

It catalyses the reaction a carboxylic ester + H2O = an alcohol + a carboxylate + H(+). Functionally, catalyzes the hydrolysis of esters. In Shigella sonnei (strain Ss046), this protein is Esterase FrsA.